A 504-amino-acid polypeptide reads, in one-letter code: Argininosuccinate lyase 2 (504 aa).

Belongs to the lyase 1 family. Argininosuccinate lyase subfamily.

The protein resides in the cytoplasm. It catalyses the reaction 2-(N(omega)-L-arginino)succinate = fumarate + L-arginine. It functions in the pathway amino-acid biosynthesis; L-arginine biosynthesis; L-arginine from L-ornithine and carbamoyl phosphate: step 3/3. This chain is Argininosuccinate lyase 2, found in Agrobacterium fabrum (strain C58 / ATCC 33970) (Agrobacterium tumefaciens (strain C58)).